The chain runs to 67 residues: Large ribosomal subunit protein uL29 (67 aa).

Belongs to the universal ribosomal protein uL29 family. In terms of assembly, part of the 50S ribosomal subunit. Contacts protein L23 and trigger factor when it is complexed with the ribosome.

Binds the 23S rRNA. One of the proteins that surrounds the polypeptide exit tunnel on the outside of the subunit. This Deinococcus radiodurans (strain ATCC 13939 / DSM 20539 / JCM 16871 / CCUG 27074 / LMG 4051 / NBRC 15346 / NCIMB 9279 / VKM B-1422 / R1) protein is Large ribosomal subunit protein uL29 (rpmC).